The chain runs to 122 residues: Holo-[acyl-carrier-protein] synthase (122 aa).

2 residues coordinate Mg(2+): Asp8 and Glu56.

It belongs to the P-Pant transferase superfamily. AcpS family. Mg(2+) is required as a cofactor.

Its subcellular location is the cytoplasm. It carries out the reaction apo-[ACP] + CoA = holo-[ACP] + adenosine 3',5'-bisphosphate + H(+). Functionally, transfers the 4'-phosphopantetheine moiety from coenzyme A to a Ser of acyl-carrier-protein. This chain is Holo-[acyl-carrier-protein] synthase, found in Salinispora arenicola (strain CNS-205).